Here is a 619-residue protein sequence, read N- to C-terminus: DNA mismatch repair protein MutL (619 aa).

The span at 364–375 (EPASAREPAAPR) shows a compositional bias: low complexity. A disordered region spans residues 364–399 (EPASAREPAAPRYSTSSGATGGRQPAASWPHAQPGY).

Belongs to the DNA mismatch repair MutL/HexB family.

In terms of biological role, this protein is involved in the repair of mismatches in DNA. It is required for dam-dependent methyl-directed DNA mismatch repair. May act as a 'molecular matchmaker', a protein that promotes the formation of a stable complex between two or more DNA-binding proteins in an ATP-dependent manner without itself being part of a final effector complex. The sequence is that of DNA mismatch repair protein MutL from Citrobacter koseri (strain ATCC BAA-895 / CDC 4225-83 / SGSC4696).